Consider the following 407-residue polypeptide: Tryptophan synthase beta chain (407 aa).

Lys-91 carries the post-translational modification N6-(pyridoxal phosphate)lysine.

It belongs to the TrpB family. As to quaternary structure, tetramer of two alpha and two beta chains. It depends on pyridoxal 5'-phosphate as a cofactor.

It carries out the reaction (1S,2R)-1-C-(indol-3-yl)glycerol 3-phosphate + L-serine = D-glyceraldehyde 3-phosphate + L-tryptophan + H2O. It functions in the pathway amino-acid biosynthesis; L-tryptophan biosynthesis; L-tryptophan from chorismate: step 5/5. Its function is as follows. The beta subunit is responsible for the synthesis of L-tryptophan from indole and L-serine. This is Tryptophan synthase beta chain from Streptococcus pneumoniae (strain Hungary19A-6).